The following is a 238-amino-acid chain: 1-(5-phosphoribosyl)-5-[(5-phosphoribosylamino)methylideneamino] imidazole-4-carboxamide isomerase (238 aa).

Aspartate 8 acts as the Proton acceptor in catalysis. The Proton donor role is filled by aspartate 127.

The protein belongs to the HisA/HisF family.

The protein resides in the cytoplasm. The enzyme catalyses 1-(5-phospho-beta-D-ribosyl)-5-[(5-phospho-beta-D-ribosylamino)methylideneamino]imidazole-4-carboxamide = 5-[(5-phospho-1-deoxy-D-ribulos-1-ylimino)methylamino]-1-(5-phospho-beta-D-ribosyl)imidazole-4-carboxamide. Its pathway is amino-acid biosynthesis; L-histidine biosynthesis; L-histidine from 5-phospho-alpha-D-ribose 1-diphosphate: step 4/9. This is 1-(5-phosphoribosyl)-5-[(5-phosphoribosylamino)methylideneamino] imidazole-4-carboxamide isomerase from Nitratiruptor sp. (strain SB155-2).